The primary structure comprises 419 residues: UPF0229 protein TERTU_3150 (419 aa).

The disordered stretch occupies residues 63–111; the sequence is IFHHGSGGKNNRVLPGNDRFNGGDHIERPEQGQGGGGNGSGASDSGEGE. Basic and acidic residues predominate over residues 83–92; the sequence is NGGDHIERPE.

This sequence belongs to the UPF0229 family.

The chain is UPF0229 protein TERTU_3150 from Teredinibacter turnerae (strain ATCC 39867 / T7901).